The sequence spans 849 residues: Protein translocase subunit SecA (849 aa).

Residues glutamine 85, 103 to 107 (GEGKT), and aspartate 493 each bind ATP. Residues cysteine 832, cysteine 834, cysteine 843, and histidine 844 each contribute to the Zn(2+) site.

It belongs to the SecA family. As to quaternary structure, monomer and homodimer. Part of the essential Sec protein translocation apparatus which comprises SecA, SecYEG and auxiliary proteins SecDF. Other proteins may also be involved. Requires Zn(2+) as cofactor.

The protein resides in the cell membrane. It is found in the cytoplasm. It catalyses the reaction ATP + H2O + cellular proteinSide 1 = ADP + phosphate + cellular proteinSide 2.. In terms of biological role, part of the Sec protein translocase complex. Interacts with the SecYEG preprotein conducting channel. Has a central role in coupling the hydrolysis of ATP to the transfer of proteins into and across the cell membrane, serving as an ATP-driven molecular motor driving the stepwise translocation of polypeptide chains across the membrane. In Streptococcus thermophilus (strain CNRZ 1066), this protein is Protein translocase subunit SecA.